The primary structure comprises 310 residues: Thioredoxin reductase (310 aa).

FAD is bound at residue 34–41 (NGMQPGGQ). An intrachain disulfide couples Cys-135 to Cys-138. Residue 281–290 (DVQDKIYRQA) participates in FAD binding.

It belongs to the class-II pyridine nucleotide-disulfide oxidoreductase family. In terms of assembly, homodimer. FAD is required as a cofactor.

The protein localises to the cytoplasm. The enzyme catalyses [thioredoxin]-dithiol + NADP(+) = [thioredoxin]-disulfide + NADPH + H(+). The chain is Thioredoxin reductase (trxB) from Rickettsia felis (strain ATCC VR-1525 / URRWXCal2) (Rickettsia azadi).